Reading from the N-terminus, the 55-residue chain is uncharacterized protein (55 aa).

The stretch at 17–44 (QNVNIALTKKRLDTAQQNADQTLKMIQH) forms a coiled coil.

This is an uncharacterized protein from Bacillus subtilis (strain 168).